The primary structure comprises 432 residues: 3-phosphoshikimate 1-carboxyvinyltransferase (432 aa).

Lys-25, Ser-26, and Arg-30 together coordinate 3-phosphoshikimate. Lys-25 serves as a coordination point for phosphoenolpyruvate. Phosphoenolpyruvate is bound by residues Gly-97 and Arg-125. Residues Ser-170, Gln-172, Asp-318, and Lys-345 each coordinate 3-phosphoshikimate. A phosphoenolpyruvate-binding site is contributed by Gln-172. Asp-318 (proton acceptor) is an active-site residue. The phosphoenolpyruvate site is built by Arg-349 and Arg-393.

The protein belongs to the EPSP synthase family. As to quaternary structure, monomer.

Its subcellular location is the cytoplasm. The catalysed reaction is 3-phosphoshikimate + phosphoenolpyruvate = 5-O-(1-carboxyvinyl)-3-phosphoshikimate + phosphate. It participates in metabolic intermediate biosynthesis; chorismate biosynthesis; chorismate from D-erythrose 4-phosphate and phosphoenolpyruvate: step 6/7. In terms of biological role, catalyzes the transfer of the enolpyruvyl moiety of phosphoenolpyruvate (PEP) to the 5-hydroxyl of shikimate-3-phosphate (S3P) to produce enolpyruvyl shikimate-3-phosphate and inorganic phosphate. The protein is 3-phosphoshikimate 1-carboxyvinyltransferase of Geobacillus thermodenitrificans (strain NG80-2).